The primary structure comprises 239 residues: Lactate utilization protein A (239 aa).

Belongs to the LutA/YkgE family.

Functionally, is involved in L-lactate degradation and allows cells to grow with lactate as the sole carbon source. The sequence is that of Lactate utilization protein A from Bacillus cereus (strain G9842).